The chain runs to 392 residues: Pyoverdine export membrane fusion protein PvdR (392 aa).

Residues 1–36 constitute a signal peptide (tat-type signal); the sequence is MRRSTHTRRRLLLGGLGLLGLGSLLAWTSLPFGAQP. A coiled-coil region spans residues 109–181; it reads IDNLKAQLAE…NASLRSDEAE (73 aa). The tract at residues 267 to 286 is disordered; it reads PPKPLDQTSQGGGSPASATA.

The protein belongs to the membrane fusion protein (MFP) (TC 8.A.1) family. Part of the tripartite efflux system PvdRT-OpmQ, which is composed of an inner membrane component with both ATPase and permease domains, PvdT, a periplasmic membrane fusion protein, PvdR, and an outer membrane component, OpmQ. Predicted to be exported by the Tat system. The position of the signal peptide cleavage has not been experimentally proven.

Its subcellular location is the periplasm. Part of the tripartite efflux system PvdRT-OpmQ required for the secretion into the extracellular milieu of the siderophore pyoverdine (PVD), which is involved in iron acquisition. This subunit is an adapter protein that stimulates the ATPase activity of PvdT and connects the inner and outer membrane components. The system is responsible for export of newly synthesized PVD after the final steps of biosynthesis have taken place in the periplasm. It is also responsible for recycling of PVD after internalization of ferri-PVD into the periplasm by the outer-membrane receptor FpvA and release of iron from PVD, thus making PVD available for new cycles of iron uptake. Contributes to resistance against ampicillin. The chain is Pyoverdine export membrane fusion protein PvdR from Pseudomonas putida (strain ATCC 47054 / DSM 6125 / CFBP 8728 / NCIMB 11950 / KT2440).